The sequence spans 399 residues: MTTNTVSRKVAWLRVVTLAIAAFIFNTTEFAPVGLLSDIAGSFGMETAQVGMMLTIYAWVVALMSLPFMLLTSKMERRRLLIGLFILFIASHVLSFFAWSFDVLVISRIGIAFAHAVFWSITSALAIRMAPPGKRAQALSLIATGTALAMVFGIPIGRIIGQYFGWRMTFLAIGLGALATLACLVKLLPTLPSEHSGSLKSLPVLFRRPALVSVYILTVVVVTAHYTAYSYIEPFVQTVAGLSGNFATVLLLILGGAGIIGSILFGKLGNQHASGLISIAIGLLLACLLLLLPASDNAHHLMLLSIFWGVAIMIIGLGMQVKVLASAPDATDVAMSLFSGIFNIGIGAGALVGSQVSLHLSMASIGYIGAIPALAALVWSLMIFRRWPVSLEDHQPHHS.

12 helical membrane passes run 15–35 (VVTL…PVGL), 50–70 (VGMM…PFML), 81–101 (LIGL…AWSF), 103–123 (VLVI…SITS), 136–156 (AQAL…GIPI), 168–188 (MTFL…VKLL), 209–229 (PALV…YTAY), 246–266 (FATV…ILFG), 273–293 (ASGL…LLLP), 301–321 (LMLL…GMQV), 333–353 (VAMS…ALVG), and 364–384 (SIGY…LMIF).

The protein belongs to the major facilitator superfamily. SotB (TC 2.A.1.2) family.

Its subcellular location is the cell inner membrane. Functionally, involved in the efflux of sugars. The physiological role may be the reduction of the intracellular concentration of toxic sugars or sugar metabolites. This Klebsiella pneumoniae (strain 342) protein is Probable sugar efflux transporter.